We begin with the raw amino-acid sequence, 515 residues long: MTFLFSTLQLSLFSLALVIFGYIFLRKQLSRCEVDSSTIPEPLGALPLFGHLHLLRGKKLLCKKLAAMSQKHGPIFSLKLGFYRLVVASDPKTVKDCFTTNDLATATRPNIAFGRYVGYNNASLTLAPYGDYWRELRKIVTVHLFSNHSIEMLGHIRSSEVNTLIKHLYKGNGGTSIVKIDMLFEFLTFNIILRKMVGKRIGFGEVNSDEWRYKEALKHCEYLAVIPMIGDVIPWLGWLDFAKNSQMKRLFKELDSVNTKWLHEHLKKRSRNEKDQERTIMDLLLDILPEDIVISGHVRDVIVKATILALTLTGSDSTSITLTWAVSLLLNNPAALEAAQEEIDNSVGKGRWIEESDIQNLKYLQAIVKETHRLYPPAPLTGIREAREDCFVGGYRVEKGTRLLVNIWKLHRDPKIWPDPKTFKPERFMEDKSQCEKSNFEYIPFGSGRRSCPGVNLGLRVVHFVLARLLQGFELHKVSDEPLDMAEGPGLALPKINPVEVVVMPRLDPKLYSLL.

Residues 3-23 (FLFSTLQLSLFSLALVIFGYI) form a helical membrane-spanning segment. Substrate is bound at residue His-219. Residue Lys-252 forms a Glycyl lysine isopeptide (Lys-Gly) (interchain with G-Cter in ubiquitin) linkage. Position 452 (Cys-452) interacts with heme.

The protein belongs to the cytochrome P450 family. The cofactor is heme. Expressed in stems, flower peduncles, receptacle of developing and mature flowers and in stigma of mature opening flower buds.

It localises to the membrane. The catalysed reaction is (3S,6E)-nerolidol + reduced [NADPH--hemoprotein reductase] + O2 = (3E)-4,8-dimethylnona-1,3,7-triene + but-3-en-2-one + oxidized [NADPH--hemoprotein reductase] + 2 H2O + H(+). It catalyses the reaction (6E,10E)-geranyllinalool + reduced [NADPH--hemoprotein reductase] + O2 = (3E,7E)-4,8,12-trimethyltrideca 1,3,7,11-tetraene + but-3-en-2-one + oxidized [NADPH--hemoprotein reductase] + 2 H2O + H(+). It participates in secondary metabolite biosynthesis; terpenoid biosynthesis. In terms of biological role, involved in the biosynthesis of homoterpenes, attractants of herbivores parasitoids and predators (e.g. predatory mites and parasitoid wasps). Catalyzes the conversion of the C20 (E,E)-geranyllinalool to C16-homoterpene 4,8,12-trimethyltrideca-1,3,7,11-tetraene (TMTT) of the C15 (E)-nerolidol to C11-homoterpene (E)-4,8-dimethyl-1,3,7-nonatriene (DMNT); these volatile compounds are produced upon insect herbivore attack and emitted from flowers and vegetative tissues during herbivore feeding. Required during resistance responses to the fungus Alternaria brassicae. Prevents oviposition of the phloem-feeding insect cabbage whitefly (Aleyrodes proletella). The protein is Dimethylnonatriene synthase of Arabidopsis thaliana (Mouse-ear cress).